We begin with the raw amino-acid sequence, 225 residues long: tRNA (guanine-N(1)-)-methyltransferase (225 aa).

S-adenosyl-L-methionine is bound by residues G112 and 132-137; that span reads IGDYVL.

The protein belongs to the RNA methyltransferase TrmD family. In terms of assembly, homodimer.

The protein localises to the cytoplasm. It catalyses the reaction guanosine(37) in tRNA + S-adenosyl-L-methionine = N(1)-methylguanosine(37) in tRNA + S-adenosyl-L-homocysteine + H(+). Functionally, specifically methylates guanosine-37 in various tRNAs. The chain is tRNA (guanine-N(1)-)-methyltransferase from Bacteroides thetaiotaomicron (strain ATCC 29148 / DSM 2079 / JCM 5827 / CCUG 10774 / NCTC 10582 / VPI-5482 / E50).